The primary structure comprises 221 residues: Enolase-phosphatase E1 (221 aa).

Belongs to the HAD-like hydrolase superfamily. MasA/MtnC family. As to quaternary structure, monomer. It depends on Mg(2+) as a cofactor.

It catalyses the reaction 5-methylsulfanyl-2,3-dioxopentyl phosphate + H2O = 1,2-dihydroxy-5-(methylsulfanyl)pent-1-en-3-one + phosphate. The protein operates within amino-acid biosynthesis; L-methionine biosynthesis via salvage pathway; L-methionine from S-methyl-5-thio-alpha-D-ribose 1-phosphate: step 3/6. Its pathway is amino-acid biosynthesis; L-methionine biosynthesis via salvage pathway; L-methionine from S-methyl-5-thio-alpha-D-ribose 1-phosphate: step 4/6. Its function is as follows. Bifunctional enzyme that catalyzes the enolization of 2,3-diketo-5-methylthiopentyl-1-phosphate (DK-MTP-1-P) into the intermediate 2-hydroxy-3-keto-5-methylthiopentenyl-1-phosphate (HK-MTPenyl-1-P), which is then dephosphorylated to form the acireductone 1,2-dihydroxy-3-keto-5-methylthiopentene (DHK-MTPene). The chain is Enolase-phosphatase E1 from Hydrogenobaculum sp. (strain Y04AAS1).